We begin with the raw amino-acid sequence, 275 residues long: 2,3,4,5-tetrahydropyridine-2,6-dicarboxylate N-succinyltransferase (275 aa).

Positions 107 and 144 each coordinate substrate.

Belongs to the transferase hexapeptide repeat family. Homotrimer.

The protein localises to the cytoplasm. It catalyses the reaction (S)-2,3,4,5-tetrahydrodipicolinate + succinyl-CoA + H2O = (S)-2-succinylamino-6-oxoheptanedioate + CoA. It participates in amino-acid biosynthesis; L-lysine biosynthesis via DAP pathway; LL-2,6-diaminopimelate from (S)-tetrahydrodipicolinate (succinylase route): step 1/3. This chain is 2,3,4,5-tetrahydropyridine-2,6-dicarboxylate N-succinyltransferase, found in Polynucleobacter asymbioticus (strain DSM 18221 / CIP 109841 / QLW-P1DMWA-1) (Polynucleobacter necessarius subsp. asymbioticus).